The sequence spans 123 residues: D-ribose pyranase (123 aa).

The Proton donor role is filled by His-20. Substrate contacts are provided by residues Asp-28, His-90, and 112–114 (YAN).

It belongs to the RbsD / FucU family. RbsD subfamily. Homodecamer.

Its subcellular location is the cytoplasm. It catalyses the reaction beta-D-ribopyranose = beta-D-ribofuranose. It participates in carbohydrate metabolism; D-ribose degradation; D-ribose 5-phosphate from beta-D-ribopyranose: step 1/2. Catalyzes the interconversion of beta-pyran and beta-furan forms of D-ribose. The chain is D-ribose pyranase from Corynebacterium glutamicum (strain R).